The following is a 193-amino-acid chain: Xanthine phosphoribosyltransferase (193 aa).

Xanthine is bound by residues Leu-20 and Asn-27. Residue 128–132 participates in 5-phospho-alpha-D-ribose 1-diphosphate binding; that stretch reads ANGDA. Lys-156 is a binding site for xanthine.

It belongs to the purine/pyrimidine phosphoribosyltransferase family. Xpt subfamily. Homodimer.

It localises to the cytoplasm. It catalyses the reaction XMP + diphosphate = xanthine + 5-phospho-alpha-D-ribose 1-diphosphate. It participates in purine metabolism; XMP biosynthesis via salvage pathway; XMP from xanthine: step 1/1. Its function is as follows. Converts the preformed base xanthine, a product of nucleic acid breakdown, to xanthosine 5'-monophosphate (XMP), so it can be reused for RNA or DNA synthesis. In Staphylococcus haemolyticus (strain JCSC1435), this protein is Xanthine phosphoribosyltransferase.